The primary structure comprises 97 residues: Plasmid stability protein StbC (97 aa).

Its function is as follows. Involved in plasmid stability. This is Plasmid stability protein StbC (stbC) from Pseudomonas syringae pv. tomato (strain ATCC BAA-871 / DC3000).